A 234-amino-acid chain; its full sequence is Phosphoribosylaminoimidazole-succinocarboxamide synthase (234 aa).

Belongs to the SAICAR synthetase family.

It catalyses the reaction 5-amino-1-(5-phospho-D-ribosyl)imidazole-4-carboxylate + L-aspartate + ATP = (2S)-2-[5-amino-1-(5-phospho-beta-D-ribosyl)imidazole-4-carboxamido]succinate + ADP + phosphate + 2 H(+). It functions in the pathway purine metabolism; IMP biosynthesis via de novo pathway; 5-amino-1-(5-phospho-D-ribosyl)imidazole-4-carboxamide from 5-amino-1-(5-phospho-D-ribosyl)imidazole-4-carboxylate: step 1/2. This Streptococcus agalactiae serotype III (strain NEM316) protein is Phosphoribosylaminoimidazole-succinocarboxamide synthase.